The following is a 199-amino-acid chain: V-set and transmembrane domain-containing protein 5 (199 aa).

A signal peptide spans 1 to 27 (MRPPRCVGRTQGIPLGLLAFWVATARC). The Extracellular segment spans residues 28 to 146 (LQSQGVSLYI…VSEIRYEDLH (119 aa)). In terms of domain architecture, Ig-like C2-type spans 36–138 (YIPRSAINAT…QSGTILLHVS (103 aa)). N-linked (GlcNAc...) asparagine glycans are attached at residues asparagine 43, asparagine 87, and asparagine 101. A helical membrane pass occupies residues 147 to 167 (FVAVFFALLAAVAVVLISLMW). The Cytoplasmic portion of the chain corresponds to 168–199 (VCNQCAYKFQRKRRYKLRESTTEEIEMKDVEC). Residues 169–185 (CNQCAYKFQRKRRYKLR) are important for CDC42-dependent filopodia induction.

As to quaternary structure, can homooligomerize through cis interactions within the same cell membrane. N-glycosylated.

Its subcellular location is the cell membrane. The protein resides in the cell projection. It localises to the dendrite. It is found in the axon. Its function is as follows. Cell adhesion-like membrane protein of the central nervous system (CNS) which modulates both the position and complexity of central neurons by altering their membrane morphology and dynamics. Involved in the formation of neuronal dendrites and protrusions including dendritic filopodia. In synaptogenesis, regulates synapse formation by altering dendritic spine morphology and actin distribution. Promotes formation of unstable neuronal spines such as thin and branched types. Regulates neuronal morphogenesis and migration during cortical development in the brain. This is V-set and transmembrane domain-containing protein 5 (Vstm5) from Rattus norvegicus (Rat).